The sequence spans 248 residues: Peptidyl-prolyl cis-trans isomerase, chloroplastic (248 aa).

A PPIase cyclophilin-type domain is found at 85–243; it reads FFDIEIGGES…KPCKIAKSGE (159 aa). The disordered stretch occupies residues 223 to 248; sequence QETSKLDNSPKKPCKIAKSGELPLDG.

The protein belongs to the cyclophilin-type PPIase family. As to expression, highly expressed in leaf.

The protein resides in the plastid. The protein localises to the chloroplast stroma. The catalysed reaction is [protein]-peptidylproline (omega=180) = [protein]-peptidylproline (omega=0). With respect to regulation, binds cyclosporin A (CsA). CsA mediates some of its effects via an inhibitory action on PPIase. PPIases accelerate the folding of proteins. It catalyzes the cis-trans isomerization of proline imidic peptide bonds in oligopeptides. The chain is Peptidyl-prolyl cis-trans isomerase, chloroplastic from Vicia faba (Broad bean).